Here is a 156-residue protein sequence, read N- to C-terminus: MPRKGPVARRDVLPDPIYNSKLVTRLINRIMVDGKRGIAQKILYNAFELVRERSGKDPMEVFDQALKNIMPVLEVKARRVGGANYQVPVEVKPERRTTLGLRWLVNYSRLRGEKTMEERLANEILDAANNTGAAVKKREDTHKMAEANKAFAHYRW.

The protein belongs to the universal ribosomal protein uS7 family. As to quaternary structure, part of the 30S ribosomal subunit. Contacts proteins S9 and S11.

Its function is as follows. One of the primary rRNA binding proteins, it binds directly to 16S rRNA where it nucleates assembly of the head domain of the 30S subunit. Is located at the subunit interface close to the decoding center, probably blocks exit of the E-site tRNA. The polypeptide is Small ribosomal subunit protein uS7 (Halalkalibacterium halodurans (strain ATCC BAA-125 / DSM 18197 / FERM 7344 / JCM 9153 / C-125) (Bacillus halodurans)).